Reading from the N-terminus, the 523-residue chain is Monocarboxylate transporter 7 (523 aa).

The Cytoplasmic segment spans residues 1-21 (MTQNKLKLCSKANVYTEVPDG). Residues 22-42 (GWGWAVAVSFFFVEVFTYGII) traverse the membrane as a helical segment. The Extracellular segment spans residues 43–62 (KTFGVFFNDLMDSFNESNSR). The chain crosses the membrane as a helical span at residues 63–83 (ISWIISICVFVLTFSAPLATV). Topologically, residues 84 to 91 (LSNRFGHR) are cytoplasmic. The helical transmembrane segment at 92 to 112 (LVVMLGGLLVSTGMVAASFSQ) threads the bilayer. The Extracellular portion of the chain corresponds to 113–118 (EVSHMY). Residues 119-139 (VAIGIISGLGYCFSFLPTVTI) form a helical membrane-spanning segment. The Cytoplasmic segment spans residues 140–149 (LSQYFGKRRS). Residues 150–170 (IVTAVASTGECFAVFAFAPAI) traverse the membrane as a helical segment. The Extracellular portion of the chain corresponds to 171–184 (MALKERIGWRYSLL). Residues 185–205 (FVGLLQLNIVIFGALLRPIFI) traverse the membrane as a helical segment. Residues 206 to 299 (RGPASPKIVI…KEKSFICYAL (94 aa)) are Cytoplasmic-facing. 4 positions are modified to phosphoserine: serine 234, serine 237, serine 240, and serine 247. The helical transmembrane segment at 300–320 (FGLFATLGFFAPSLYIIPLGI) threads the bilayer. The Extracellular portion of the chain corresponds to 321–330 (SLGIDQDRAA). The helical transmembrane segment at 331–351 (FLLSTMAIAEVFGRIGAGFVL) threads the bilayer. Residues 352 to 358 (NREPIRK) lie on the Cytoplasmic side of the membrane. A helical membrane pass occupies residues 359 to 379 (IYIELICVILLTVSLFAFTFA). At 380 to 381 (TE) the chain is on the extracellular side. Residues 382 to 402 (FWGLMSCSIFFGFMVGTIGGT) traverse the membrane as a helical segment. The Cytoplasmic portion of the chain corresponds to 403-423 (HIPLLAEDDVVGIEKMSSAAG). The helical transmembrane segment at 424–444 (VYIFIQSIAGLAGPPLAGLLV) threads the bilayer. At 445 to 452 (DQSKIYSR) the chain is on the extracellular side. The helical transmembrane segment at 453 to 473 (AFYSCAAGMALAAVCLALVRP) threads the bilayer. Residues 474-523 (CKMGLCQHHHSGETKVVSHRGKTLQDIPEDFLEMDLAKNEHRVHVQMEPV) are Cytoplasmic-facing.

This sequence belongs to the major facilitator superfamily. Monocarboxylate porter (TC 2.A.1.13) family. In terms of assembly, forms functional complexes with BSG/CD147 or EMB/GP70 ancillary proteins.

The protein localises to the basolateral cell membrane. The catalysed reaction is taurine(out) = taurine(in). Its function is as follows. Monocarboxylate transporter selective for taurine. May associate with BSG/CD147 or EMB/GP70 ancillary proteins to mediate facilitative efflux or influx of taurine across the plasma membrane. The transport is pH- and sodium-independent. Rather low-affinity, is likely effective for taurine transport in tissues where taurine is present at high concentrations. The chain is Monocarboxylate transporter 7 from Homo sapiens (Human).